Consider the following 235-residue polypeptide: Large ribosomal subunit protein uL1 (235 aa).

The protein belongs to the universal ribosomal protein uL1 family. In terms of assembly, part of the 50S ribosomal subunit.

Its function is as follows. Binds directly to 23S rRNA. The L1 stalk is quite mobile in the ribosome, and is involved in E site tRNA release. Functionally, protein L1 is also a translational repressor protein, it controls the translation of the L11 operon by binding to its mRNA. In Mycobacterium leprae (strain Br4923), this protein is Large ribosomal subunit protein uL1.